Reading from the N-terminus, the 301-residue chain is Putative S-adenosyl-L-methionine-dependent methyltransferase MMAR_4850 (301 aa).

S-adenosyl-L-methionine-binding positions include Asp-127 and 156 to 157 (DL).

Belongs to the UPF0677 family.

In terms of biological role, exhibits S-adenosyl-L-methionine-dependent methyltransferase activity. This chain is Putative S-adenosyl-L-methionine-dependent methyltransferase MMAR_4850, found in Mycobacterium marinum (strain ATCC BAA-535 / M).